The following is a 152-amino-acid chain: Transcription factor ATOH7 (152 aa).

In terms of domain architecture, bHLH spans 40-92 (RRRLAANARERRRMQGLNTAFDRLRRVVPQWGQDKKLSKYETLQMALSYIMAL).

In terms of assembly, forms a heterodimer with TCF3 isoform E47; interaction may be required for DNA-binding in certain situations.

Its subcellular location is the nucleus. It localises to the perikaryon. It is found in the cell projection. The protein resides in the axon. Transcription factor that binds to DNA at the consensus sequence 5'-CAG[GC]TG-3'. Dimerization with TCF3 isoform E47 may be required in certain situations. Binds to gene promoters and enhancer elements, and thereby regulates a transcriptional program of retinal ganglion cell (RGC) determinant genes. Although the exact mechanism is not certain, retinal transcription regulation by ATOH7 has a role in RGC determination and survival, photoreceptor population development, targeting of RGC axons to the optic nerve and development of the retino-hypothalamic tract. Binds to its own promoter and enhancer sequences, suggesting autoregulation of ATOH7 transcription. Required for retinal circadian rhythm photoentrainment. Plays a role in brainstem auditory signaling and binaural processing. The chain is Transcription factor ATOH7 from Homo sapiens (Human).